Reading from the N-terminus, the 842-residue chain is Leucine--tRNA ligase (842 aa).

Residues 44 to 55 (PYPSANGLHVGH) carry the 'HIGH' region motif. A 'KMSKS' region motif is present at residues 619 to 623 (KMSKS). ATP is bound at residue Lys-622.

This sequence belongs to the class-I aminoacyl-tRNA synthetase family.

Its subcellular location is the cytoplasm. The catalysed reaction is tRNA(Leu) + L-leucine + ATP = L-leucyl-tRNA(Leu) + AMP + diphosphate. The chain is Leucine--tRNA ligase from Borrelia duttonii (strain Ly).